We begin with the raw amino-acid sequence, 333 residues long: Nuclear egress protein 1 (333 aa).

Positions 45–64 are disordered; it reads SRRYKSVSRSGPSMRVRSRT. The CCCH-type zinc-finger motif lies at 128 to 251; sequence CLSLSGMGYH…YVIFPGKSVH (124 aa).

This sequence belongs to the herpesviridae NEC1 protein family. Forms a heterohexameric complex with NEC2. Interacts with capsid vertex specific component 2/CVC2; this interaction directs the capsid to the host inner nuclear membrane to initiate budding. In terms of processing, phosphorylated at serine residues in the N-terminus. This phosphorylation regulates the localization within the inner nuclear membrane.

The protein resides in the host nucleus inner membrane. Its function is as follows. Plays an essential role in virion nuclear egress, the first step of virion release from infected cell. Within the host nucleus, NEC1 interacts with the newly formed capsid through the vertexes and directs it to the inner nuclear membrane by associating with NEC2. Induces the budding of the capsid at the inner nuclear membrane as well as its envelopment into the perinuclear space. There, the NEC1/NEC2 complex promotes the fusion of the enveloped capsid with the outer nuclear membrane and the subsequent release of the viral capsid into the cytoplasm where it will reach the secondary budding sites in the host Golgi or trans-Golgi network. This is Nuclear egress protein 1 from Varicella-zoster virus (strain Dumas) (HHV-3).